Here is a 251-residue protein sequence, read N- to C-terminus: 3-deoxy-manno-octulosonate cytidylyltransferase (251 aa).

Belongs to the KdsB family.

It localises to the cytoplasm. It carries out the reaction 3-deoxy-alpha-D-manno-oct-2-ulosonate + CTP = CMP-3-deoxy-beta-D-manno-octulosonate + diphosphate. It participates in nucleotide-sugar biosynthesis; CMP-3-deoxy-D-manno-octulosonate biosynthesis; CMP-3-deoxy-D-manno-octulosonate from 3-deoxy-D-manno-octulosonate and CTP: step 1/1. Its pathway is bacterial outer membrane biogenesis; lipopolysaccharide biosynthesis. In terms of biological role, activates KDO (a required 8-carbon sugar) for incorporation into bacterial lipopolysaccharide in Gram-negative bacteria. The chain is 3-deoxy-manno-octulosonate cytidylyltransferase from Vibrio vulnificus (strain CMCP6).